A 172-amino-acid polypeptide reads, in one-letter code: uncharacterized protein (172 aa).

The first 21 residues, 1 to 21, serve as a signal peptide directing secretion; it reads MMKFKKCLLPVAMLASFTLAG. A lipid anchor (N-palmitoyl cysteine) is attached at cysteine 22. The S-diacylglycerol cysteine moiety is linked to residue cysteine 22.

The protein localises to the cell membrane. This is an uncharacterized protein from Escherichia coli O157:H7.